The following is a 609-amino-acid chain: MLNLSAEQRPRLRQPIVAVLGHVDHGKTTLLDKIRGTVVALKEPGQITQHIGASLVPTDVIEKVTEPLKKIIPTVKLELPGLLFIDTPGHEIFSNLRRRGGAVADLAILVVDLNEGFQPQTYEAVEILKQRRVPFVVAANKIDRIPGWRSYPDQPFLISYRKQSEEVRERLDNKIYEIMGELAKLGFDSERFDRITNFTRQIAIVPISAKTGEGIPELLAVLAGLAQRYMKGRLKYVEGPAKGVIMEVKEEPGYGSTIDTIIYDGIIRQGDTIVVGGIEGPIVTKVRALLVPAPLTEMRATKRFEPVEEVSAAAGVKIVAPGLEKAVAGAPVYVVDSPEKLEELKEQVKREVEEVMIETDKEGVIVKADTLGTLEALVQFLKNRGIPVRMARVGPVTKRDIVEAMTVKSKNKEYGVILAFNVKVLPEAKELAEKEGIKIFQHNVIYRLIEEFEEWLKALREEEKRKVLETLVRPGKIRILPGFVFRRSDPAIVGVEVLGGVIKPKYPLMKEDGSRVGSILQIQDKGQSVPEARAGQQVAISIKGRVMVGRHIHEGDVLYTDVPAEHAKLWLTKFKNELSDDEKFVLQEIIKIKRKQNPLYGVVLPSPSS.

A tr-type G domain is found at Leu12 to Met230. A G1 region spans residues Gly21–Thr28. GTP is bound at residue Gly21–Thr28. Positions Gln46–His50 are G2. The interval Asp86–Gly89 is G3. Residues Asp86–His90 and Asn140–Asp143 contribute to the GTP site. The G4 stretch occupies residues Asn140–Asp143. A G5 region spans residues Ser208–Lys210.

The protein belongs to the TRAFAC class translation factor GTPase superfamily. Classic translation factor GTPase family. IF-2 subfamily.

Its function is as follows. Function in general translation initiation by promoting the binding of the formylmethionine-tRNA to ribosomes. Seems to function along with eIF-2. In Ignicoccus hospitalis (strain KIN4/I / DSM 18386 / JCM 14125), this protein is Probable translation initiation factor IF-2.